An 87-amino-acid chain; its full sequence is Small ribosomal subunit protein bS20 (87 aa).

Belongs to the bacterial ribosomal protein bS20 family.

In terms of biological role, binds directly to 16S ribosomal RNA. In Clostridium perfringens (strain ATCC 13124 / DSM 756 / JCM 1290 / NCIMB 6125 / NCTC 8237 / Type A), this protein is Small ribosomal subunit protein bS20.